Here is a 319-residue protein sequence, read N- to C-terminus: Annexin A4 (319 aa).

Alanine 2 bears the N-acetylalanine mark. At threonine 7 the chain carries Phosphothreonine. The residue at position 12 (serine 12) is a Phosphoserine. Annexin repeat units lie at residues 14–85, 86–157, 169–241, and 245–316; these read FSAT…GMIT, PTVL…SLSA, ALMR…AIVK, and NKSA…ILCG. Lysine 213, lysine 293, and lysine 300 each carry N6-acetyllysine.

The protein belongs to the annexin family. As to expression, expressed in pancreas (at protein level). Also detected in liver, spleen, intestine, stomach, kidney, and adrenal glands.

The protein localises to the zymogen granule membrane. In terms of biological role, calcium/phospholipid-binding protein which promotes membrane fusion and is involved in exocytosis. This Canis lupus familiaris (Dog) protein is Annexin A4 (ANXA4).